A 446-amino-acid chain; its full sequence is D-inositol 3-phosphate glycosyltransferase (446 aa).

Residue H19 coordinates 1D-myo-inositol 3-phosphate. Residues 25-26 (QP) and G33 contribute to the UDP-N-acetyl-alpha-D-glucosamine site. 1D-myo-inositol 3-phosphate contacts are provided by residues 30–35 (DAGGMN), K88, Y121, T145, and R165. UDP-N-acetyl-alpha-D-glucosamine-binding residues include R239, K244, and Q303. Positions 312, 313, and 315 each coordinate Mg(2+). Positions 325 and 333 each coordinate UDP-N-acetyl-alpha-D-glucosamine. T339 is a Mg(2+) binding site.

The protein belongs to the glycosyltransferase group 1 family. MshA subfamily. Homodimer.

It catalyses the reaction 1D-myo-inositol 3-phosphate + UDP-N-acetyl-alpha-D-glucosamine = 1D-myo-inositol 2-acetamido-2-deoxy-alpha-D-glucopyranoside 3-phosphate + UDP + H(+). Functionally, catalyzes the transfer of a N-acetyl-glucosamine moiety to 1D-myo-inositol 3-phosphate to produce 1D-myo-inositol 2-acetamido-2-deoxy-glucopyranoside 3-phosphate in the mycothiol biosynthesis pathway. In Rhodococcus opacus (strain B4), this protein is D-inositol 3-phosphate glycosyltransferase.